A 170-amino-acid chain; its full sequence is Cyclic pyranopterin monophosphate synthase (170 aa).

Residues 75–77 (MCH) and 115–116 (ME) each bind substrate. D130 is a catalytic residue.

This sequence belongs to the MoaC family. As to quaternary structure, homohexamer; trimer of dimers.

It carries out the reaction (8S)-3',8-cyclo-7,8-dihydroguanosine 5'-triphosphate = cyclic pyranopterin phosphate + diphosphate. It functions in the pathway cofactor biosynthesis; molybdopterin biosynthesis. Functionally, catalyzes the conversion of (8S)-3',8-cyclo-7,8-dihydroguanosine 5'-triphosphate to cyclic pyranopterin monophosphate (cPMP). The protein is Cyclic pyranopterin monophosphate synthase of Bacillus velezensis (strain DSM 23117 / BGSC 10A6 / LMG 26770 / FZB42) (Bacillus amyloliquefaciens subsp. plantarum).